The primary structure comprises 533 residues: CTP synthase (533 aa).

Residues 1-269 are amidoligase domain; sequence MKKNLKILVI…HEILSSKLNI (269 aa). Residue Ser-16 participates in CTP binding. Ser-16 contributes to the UTP binding site. ATP-binding positions include 17 to 22 and Asp-73; that span reads GIGKGV. Mg(2+) is bound by residues Asp-73 and Glu-143. Residues 150-152, 190-195, and Lys-226 each bind CTP; these read DME and KSKPTQ. Residues 190–195 and Lys-226 each bind UTP; that span reads KSKPTQ. In terms of domain architecture, Glutamine amidotransferase type-1 spans 304 to 533; that stretch reads YAELDDSYAS…LFLGLIKACI (230 aa). An L-glutamine-binding site is contributed by Gly-355. The active-site Nucleophile; for glutamine hydrolysis is Cys-382. L-glutamine-binding positions include 383-386, Glu-406, and Arg-466; that span reads LGLQ. Residues His-511 and Glu-513 contribute to the active site.

The protein belongs to the CTP synthase family. As to quaternary structure, homotetramer.

It carries out the reaction UTP + L-glutamine + ATP + H2O = CTP + L-glutamate + ADP + phosphate + 2 H(+). It catalyses the reaction L-glutamine + H2O = L-glutamate + NH4(+). The enzyme catalyses UTP + NH4(+) + ATP = CTP + ADP + phosphate + 2 H(+). It functions in the pathway pyrimidine metabolism; CTP biosynthesis via de novo pathway; CTP from UDP: step 2/2. Allosterically activated by GTP, when glutamine is the substrate; GTP has no effect on the reaction when ammonia is the substrate. The allosteric effector GTP functions by stabilizing the protein conformation that binds the tetrahedral intermediate(s) formed during glutamine hydrolysis. Inhibited by the product CTP, via allosteric rather than competitive inhibition. Functionally, catalyzes the ATP-dependent amination of UTP to CTP with either L-glutamine or ammonia as the source of nitrogen. Regulates intracellular CTP levels through interactions with the four ribonucleotide triphosphates. This chain is CTP synthase, found in Borreliella burgdorferi (strain ATCC 35210 / DSM 4680 / CIP 102532 / B31) (Borrelia burgdorferi).